The sequence spans 102 residues: MSDQATALKIKPLGDRILVKREEEDTTSHGGIILPDTAKKKQDRAEVLALGTGKRDKDGQILPFEVKVGDIVLIDKYAGQELTIEGEEYVIVQESEVMAVLN.

Belongs to the GroES chaperonin family. As to quaternary structure, heptamer of 7 subunits arranged in a ring. Interacts with the chaperonin GroEL.

The protein resides in the cytoplasm. In terms of biological role, together with the chaperonin GroEL, plays an essential role in assisting protein folding. The GroEL-GroES system forms a nano-cage that allows encapsulation of the non-native substrate proteins and provides a physical environment optimized to promote and accelerate protein folding. GroES binds to the apical surface of the GroEL ring, thereby capping the opening of the GroEL channel. The sequence is that of Co-chaperonin GroES from Chlamydia felis (strain Fe/C-56) (Chlamydophila felis).